Consider the following 364-residue polypeptide: DNA polymerase IV (364 aa).

One can recognise a UmuC domain in the interval 6–194 (VFHIDFDYFY…LKIRDIPGIG (189 aa)). Residues Asp10 and Asp111 each coordinate Mg(2+). The active site involves Glu112.

It belongs to the DNA polymerase type-Y family. As to quaternary structure, monomer. Requires Mg(2+) as cofactor.

It is found in the cytoplasm. The catalysed reaction is DNA(n) + a 2'-deoxyribonucleoside 5'-triphosphate = DNA(n+1) + diphosphate. In terms of biological role, poorly processive, error-prone DNA polymerase involved in untargeted mutagenesis. Copies undamaged DNA at stalled replication forks, which arise in vivo from mismatched or misaligned primer ends. These misaligned primers can be extended by PolIV. Exhibits no 3'-5' exonuclease (proofreading) activity. May be involved in translesional synthesis. This is DNA polymerase IV from Nitrosopumilus maritimus (strain SCM1).